Reading from the N-terminus, the 857-residue chain is MSENSQSSPFFGTESTLHPSLPLLSNSIQPAGTVCNFSRVSTPDVSSAWLLPSASSTSLQPLMGNAYLNPHAGTTMLTVLTEQGQISTSTPSYPGALKWDCTGSTHGREDALQEFNMKLIDQDTTLSSLAVTNQSDKILDPNVIVPFHPTLSSSFVQITPSQMPNQGYSLAPSYQEGSQVYYYEHNNLGPLIAGEFGQCLKAHGSVSYPGSQTSVLQPEMVMVLKEIQPRNIQMPLFTSAFSYSTSAQSMPDNGLPVVQMETSLGLPPSGQTHCQLQSPELCNTCVQVSQIRPPAVNGDKALTAPIHSPSEFLALPPAPSLEQPENKTMPEIKEGTKENQDRPVLTLEHPDLQQPLHCTDTESLRQKPDSDNAHLGCICMGPKELVGLENENGSSFNFKDITRLEADIQLPQLLNTLTDIDQDQSCETWTVTSGPSDQVRKNKHKSFELLEGAPQAKFQHWDLVEGEGAGGVAGASERAIDNMAKQPEGKAPKGPPSKNRKARKQEQERPSGPQNKSKKTEELKQSRNTAKAEENLSIPKTKRKRNPPELSQNSFKKPRTNLAMHMLESVQVFHPLGKKTEKKTGISSFRGLRTFTINKDPGPGSGTVTTTVLNMPCEGQFPPKSPGKVQRAESSIDKDCLSPSQYELPPAGKVKLVPLPFPTLDKPQSRPASRKPLSLALRRTTTVQPHSHSAQPTTLRPAQPPPVSSSLIASAKPAPPISSSSTGPNVTNPNQSSAVPHLVTSRPVPYRASSHTSFQRELVSAARNKVPSPPKPQTKYLLHDFSRQPIPWKKVDILGPVVSQPITKEQRPEREAMKRQAQQERENAVKNPSTGKLQIFLQRERDMEISQYYGYAM.

4 disordered regions span residues 316-339 (PPAPSLEQPENKTMPEIKEGTKEN), 484-561 (AKQP…PRTN), 619-777 (GQFP…PKPQ), and 809-836 (EQRPEREAMKRQAQQERENAVKNPSTGK). 3 stretches are compositionally biased toward basic and acidic residues: residues 324–339 (PENKTMPEIKEGTKEN), 518–534 (KKTEELKQSRNTAKAEE), and 630–640 (QRAESSIDKDC). Positions 683 to 700 (RTTTVQPHSHSAQPTTLR) are enriched in polar residues. The span at 708-725 (SSSLIASAKPAPPISSSS) shows a compositional bias: low complexity. The segment covering 726 to 738 (TGPNVTNPNQSSA) has biased composition (polar residues). The segment covering 809–828 (EQRPEREAMKRQAQQERENA) has biased composition (basic and acidic residues).

This is an uncharacterized protein from Mus musculus (Mouse).